Here is a 1222-residue protein sequence, read N- to C-terminus: Serine/threonine-protein kinase WNK4 (1222 aa).

Polar residues predominate over residues 1–17 (MLAPRNTETGVPMSQTE). A disordered region spans residues 1 to 165 (MLAPRNTETG…DTETQAVATS (165 aa)). Positions 90-101 (AGPTRSPPSSSK) are enriched in low complexity. A Phosphoserine modification is found at Ser-95. Over residues 135–152 (EPPRVPDAAARERRREQE) the composition is skewed to basic and acidic residues. Glycyl lysine isopeptide (Lys-Gly) (interchain with G-Cter in ubiquitin) cross-links involve residues Lys-154 and Lys-172. The Protein kinase domain occupies 171-429 (LKFDIEIGRG…IQDLLAHAFF (259 aa)). Ser-181 contributes to the ATP binding site. Glycyl lysine isopeptide (Lys-Gly) (interchain with G-Cter in ubiquitin) cross-links involve residues Lys-183, Lys-223, and Lys-238. ATP contacts are provided by residues 251 to 254 (TELM) and Lys-301. The Proton acceptor role is filled by Asp-318. Lys-325 participates in a covalent cross-link: Glycyl lysine isopeptide (Lys-Gly) (interchain with G-Cter in ubiquitin). Phosphoserine; by autocatalysis occurs at positions 328 and 332. Glycyl lysine isopeptide (Lys-Gly) (interchain with G-Cter in ubiquitin) cross-links involve residues Lys-384, Lys-390, Lys-447, and Lys-451. The interval 525-562 (RELEVLPPDSGPPPATVSLAPGPPSAFPPEPEEPEADQ) is disordered. Over residues 533 to 553 (DSGPPPATVSLAPGPPSAFPP) the composition is skewed to pro residues. Residues 554–564 (EPEEPEADQHQ) are interaction with KLHL3. At Ser-572 the chain carries Phosphoserine. 4 disordered regions span residues 626–659 (RSGP…MRKN), 747–809 (DAGP…GAPF), 877–896 (SYPQ…SPPS), and 927–976 (SPGL…AQPL). 4 stretches are compositionally biased toward low complexity: residues 627-638 (SGPGSDFSPGDS), 757-769 (ALSP…ALPA), 793-807 (STSP…SPGA), and 877-890 (SYPQ…SLPV). Over residues 935–944 (PPAPPGPLPS) the composition is skewed to pro residues. A compositionally biased stretch (polar residues) spans 953–963 (DQESLSAQTAE). Lys-990 participates in a covalent cross-link: Glycyl lysine isopeptide (Lys-Gly) (interchain with G-Cter in ubiquitin). The RFXV motif signature appears at 996–999 (RFQV). Residues 1000–1087 (TSSKEPAEPP…SSPILSHPSP (88 aa)) form a disordered region. Ser-1014 is subject to Phosphoserine. Positions 1014 to 1032 (SPTLSRSLKLPSPPLTSES) are enriched in low complexity. Residues 1044-1056 (ETREALAESDRAA) show a composition bias toward basic and acidic residues. Glycyl lysine isopeptide (Lys-Gly) (interchain with G-Cter in ubiquitin) cross-links involve residues Lys-1123, Lys-1136, and Lys-1137. Residues 1166–1222 (RRLSKGSFPTSRRNSLQRSDLPGPGIMRRNSLSGSSTGSQEQRASKGVTFAGDIGRM) are disordered. Composition is skewed to polar residues over residues 1172 to 1183 (SFPTSRRNSLQR) and 1195 to 1207 (NSLS…SQEQ). The residue at position 1196 (Ser-1196) is a Phosphoserine.

It belongs to the protein kinase superfamily. Ser/Thr protein kinase family. WNK subfamily. As to quaternary structure, interacts with the C-terminal region of KCNJ1. Interacts with WNK1 and WNK3. Interacts with KLHL3. It depends on Mg(2+) as a cofactor. Autophosphorylated at Ser-328 and Ser-332, promoting its activation. Phosphorylated by WNK1 and WNK3. Phosphorylated at Ser-572 in a MAP3K15/ASK3-dependent process in response to osmotic stress or hypotonic low-chloride stimulation. In terms of processing, ubiquitinated by the BCR(KLHL3) complex, leading to its degradation. Also ubiquitinated by the BCR(KLHL2) complex. In terms of tissue distribution, locates to the distal convoluted tubule, the medullary collecting duct and the cortical collecting duct of the kidney. Expressed in pancreatic duct.

The protein resides in the cell junction. Its subcellular location is the tight junction. The catalysed reaction is L-seryl-[protein] + ATP = O-phospho-L-seryl-[protein] + ADP + H(+). It catalyses the reaction L-threonyl-[protein] + ATP = O-phospho-L-threonyl-[protein] + ADP + H(+). With respect to regulation, activation requires autophosphorylation of Ser-328 and Ser-332. Autophosphorylation and subsequent activation is inhibited by increases in intracellular ionic strength: Cl(-) potently inhibits WNK4 kinase activity via direct binding. Also inhibited by K(+) ions. Functionally, serine/threonine-protein kinase component of the WNK4-SPAK/OSR1 kinase cascade, which acts as a key regulator of ion transport in the distal nephron and blood pressure. The WNK4-SPAK/OSR1 kinase cascade is composed of WNK4, which mediates phosphorylation and activation of downstream kinases OXSR1/OSR1 and STK39/SPAK. Following activation, OXSR1/OSR1 and STK39/SPAK catalyze phosphorylation of ion cotransporters, such as SLC12A1/NKCC2, SLC12A2/NKCC1, SLC12A3/NCC, SLC12A5/KCC2 or SLC12A6/KCC3, regulating their activity. Acts as a molecular switch that regulates the balance between renal salt reabsorption and K(+) secretion by modulating the activities of renal transporters and channels, including the Na-Cl cotransporter SLC12A3/NCC and the K(+) channel, KCNJ1/ROMK. Regulates NaCl reabsorption in the distal nephron by activating the thiazide-sensitive Na-Cl cotransporter SLC12A3/NCC in distal convoluted tubule cells of kidney: activates SLC12A3/NCC in a OXSR1/OSR1- and STK39/SPAK-dependent process. Also acts as a scaffold protein independently of its protein kinase activity: negatively regulates cell membrane localization of various transporters and channels (CFTR, KCNJ1/ROMK, SLC4A4, SLC26A9 and TRPV4) by clathrin-dependent endocytosis. Also inhibits the activity of the epithelial Na(+) channel (ENaC) SCNN1A, SCNN1B, SCNN1D in a inase-independent mechanism. May also phosphorylate NEDD4L. This chain is Serine/threonine-protein kinase WNK4, found in Mus musculus (Mouse).